Reading from the N-terminus, the 137-residue chain is uncharacterized protein (137 aa).

This is an uncharacterized protein from Acidianus convivator (ATV).